The following is a 698-amino-acid chain: Probable Xaa-Pro aminopeptidase P (698 aa).

Mn(2+)-binding residues include D509, D520, E604, and E618.

This sequence belongs to the peptidase M24B family. Mn(2+) is required as a cofactor.

It carries out the reaction Release of any N-terminal amino acid, including proline, that is linked to proline, even from a dipeptide or tripeptide.. In terms of biological role, catalyzes the removal of a penultimate prolyl residue from the N-termini of peptides. In Arthroderma benhamiae (strain ATCC MYA-4681 / CBS 112371) (Trichophyton mentagrophytes), this protein is Probable Xaa-Pro aminopeptidase P (AMPP).